Here is a 1077-residue protein sequence, read N- to C-terminus: Serine/threonine-protein kinase sel-5 (1077 aa).

A Protein kinase domain is found at 47–317 (VTIEKQIAEG…IYQTSVLAFE (271 aa)). Residues 53–61 (IAEGGFAIV) and K75 each bind ATP. The active-site Proton acceptor is the D178. 4 disordered regions span residues 347 to 444 (MRDG…TDGS), 488 to 554 (GFTD…SQVV), 616 to 813 (ELDS…TNPF), and 920 to 1077 (LISV…PTDL). A compositionally biased stretch (polar residues) spans 369–399 (IQSSSKMASLSQQVPSISNISMPSGSGTVET). Over residues 491 to 515 (DLDKPALPRDRAQTDGKRRLPHESD) the composition is skewed to basic and acidic residues. The span at 541 to 554 (SSQQTTSKTSSQVV) shows a compositional bias: low complexity. Over residues 638 to 648 (LTVSTSSSAQP) the composition is skewed to polar residues. Acidic residues predominate over residues 655 to 679 (TDEDDERQLLSETDEEEKYEIDEKE). Basic and acidic residues-rich tracts occupy residues 697–708 (DEQRMNDRRRYS) and 739–751 (DSRR…HDED). Residues 770–780 (EDDGLEDDDDH) are compositionally biased toward acidic residues. The span at 799–810 (GTSTPHTQNPIT) shows a compositional bias: polar residues. A compositionally biased stretch (pro residues) spans 927-936 (TDPPPPPLPK). The span at 941 to 950 (ASPTQETTAT) shows a compositional bias: polar residues. Basic residues predominate over residues 960–969 (KLLKKEKKKE). Positions 970–989 (KKDGKKDKLKLEEYREKGSS) are enriched in basic and acidic residues. Positions 1054 to 1067 (LTGKNASFVNTSFQ) are enriched in polar residues.

This sequence belongs to the protein kinase superfamily. Ser/Thr protein kinase family. The cofactor is Mg(2+).

The protein resides in the cytoplasm. It carries out the reaction L-seryl-[protein] + ATP = O-phospho-L-seryl-[protein] + ADP + H(+). The catalysed reaction is L-threonyl-[protein] + ATP = O-phospho-L-threonyl-[protein] + ADP + H(+). In terms of biological role, serine/threonine-protein kinase which may play a role in lin-12-mediated cell-fate decisions. The chain is Serine/threonine-protein kinase sel-5 from Caenorhabditis elegans.